The sequence spans 587 residues: Tectonic-1 (587 aa).

The first 22 residues, 1–22 (MRPRGLPPLLVVLLGCWASVSA), serve as a signal peptide directing secretion. The N-linked (GlcNAc...) asparagine glycan is linked to N36. The segment at 46–68 (GTFPSTRPPGTPRAPGPSSGPRP) is disordered. The span at 51–68 (TRPPGTPRAPGPSSGPRP) shows a compositional bias: pro residues. Residues N295 and N528 are each glycosylated (N-linked (GlcNAc...) asparagine).

The protein belongs to the tectonic family. In terms of assembly, part of the tectonic-like complex (also named B9 complex).

The protein localises to the cytoplasm. The protein resides in the cytoskeleton. It localises to the cilium basal body. It is found in the secreted. In terms of biological role, component of the tectonic-like complex, a complex localized at the transition zone of primary cilia and acting as a barrier that prevents diffusion of transmembrane proteins between the cilia and plasma membranes. Regulator of Hedgehog (Hh), required for both activation and inhibition of the Hh pathway in the patterning of the neural tube. During neural tube development, it is required for formation of the most ventral cell types and for full Hh pathway activation. Functions in Hh signal transduction to fully activate the pathway in the presence of high Hh levels and to repress the pathway in the absence of Hh signals. Modulates Hh signal transduction downstream of SMO and RAB23. The sequence is that of Tectonic-1 (TCTN1) from Homo sapiens (Human).